A 181-amino-acid chain; its full sequence is Ribosome maturation factor RimM (181 aa).

In terms of domain architecture, PRC barrel spans 103–181 (EGDYYWSQLE…EMVVDWDPEF (79 aa)).

This sequence belongs to the RimM family. As to quaternary structure, binds ribosomal protein uS19.

The protein resides in the cytoplasm. Its function is as follows. An accessory protein needed during the final step in the assembly of 30S ribosomal subunit, possibly for assembly of the head region. Essential for efficient processing of 16S rRNA. May be needed both before and after RbfA during the maturation of 16S rRNA. It has affinity for free ribosomal 30S subunits but not for 70S ribosomes. The sequence is that of Ribosome maturation factor RimM from Marinomonas sp. (strain MWYL1).